Here is a 347-residue protein sequence, read N- to C-terminus: RNA 3'-terminal phosphate cyclase (347 aa).

ATP contacts are provided by residues glutamine 109 and tyrosine 290 to glutamine 294. Catalysis depends on histidine 315, which acts as the Tele-AMP-histidine intermediate.

The protein belongs to the RNA 3'-terminal cyclase family. Type 1 subfamily.

It is found in the cytoplasm. It catalyses the reaction a 3'-end 3'-phospho-ribonucleotide-RNA + ATP = a 3'-end 2',3'-cyclophospho-ribonucleotide-RNA + AMP + diphosphate. Catalyzes the conversion of 3'-phosphate to a 2',3'-cyclic phosphodiester at the end of RNA. The mechanism of action of the enzyme occurs in 3 steps: (A) adenylation of the enzyme by ATP; (B) transfer of adenylate to an RNA-N3'P to produce RNA-N3'PP5'A; (C) and attack of the adjacent 2'-hydroxyl on the 3'-phosphorus in the diester linkage to produce the cyclic end product. The biological role of this enzyme is unknown but it is likely to function in some aspects of cellular RNA processing. The protein is RNA 3'-terminal phosphate cyclase of Ralstonia nicotianae (strain ATCC BAA-1114 / GMI1000) (Ralstonia solanacearum).